The following is a 353-amino-acid chain: MLYSLLYGYFNINLFQYLTFRAGLGFFIAFFLTLFLMPKFILWAKAKKANQPISSFVPSHQNKKDTPTMGGIVFVFATIVASVLCASLGNLYVLLGMIVLVGFSFVGFKDDYTKINQQNNAGMSVKMKFGMLFVLSLVVSVLLSLKGLDTFLYAPFLKNPLFEMPTILAVGFWVLVFLSTSNAVNLTDGLDGLASVPSIFTLLSLSIFVYVAGNAEFSKYLLYPKVIDVGELFVISLALVGSLFGFLWYNCNPASVFMGDSGSLALGGFIAYNAIVSHNEILLVLMGLIFVVETLSVILQVGSYKTRKKRLFLMAPIHHHFEQKGWAENKVIVRFWIISMLSNLVALLSLKVR.

10 helical membrane-spanning segments follow: residues 24-44 (LGFF…ILWA), 66-86 (TPTM…VLCA), 88-108 (LGNL…FVGF), 129-149 (FGML…KGLD), 160-180 (PLFE…FLST), 192-212 (GLAS…VYVA), 229-249 (VGEL…FLWY), 256-276 (VFMG…NAIV), 281-301 (ILLV…ILQV), and 330-350 (KVIV…LLSL).

The protein belongs to the glycosyltransferase 4 family. MraY subfamily. Mg(2+) serves as cofactor.

It localises to the cell inner membrane. It carries out the reaction UDP-N-acetyl-alpha-D-muramoyl-L-alanyl-gamma-D-glutamyl-meso-2,6-diaminopimeloyl-D-alanyl-D-alanine + di-trans,octa-cis-undecaprenyl phosphate = di-trans,octa-cis-undecaprenyl diphospho-N-acetyl-alpha-D-muramoyl-L-alanyl-D-glutamyl-meso-2,6-diaminopimeloyl-D-alanyl-D-alanine + UMP. It participates in cell wall biogenesis; peptidoglycan biosynthesis. In terms of biological role, catalyzes the initial step of the lipid cycle reactions in the biosynthesis of the cell wall peptidoglycan: transfers peptidoglycan precursor phospho-MurNAc-pentapeptide from UDP-MurNAc-pentapeptide onto the lipid carrier undecaprenyl phosphate, yielding undecaprenyl-pyrophosphoryl-MurNAc-pentapeptide, known as lipid I. The protein is Phospho-N-acetylmuramoyl-pentapeptide-transferase of Helicobacter pylori (strain Shi470).